The following is a 447-amino-acid chain: Argininosuccinate synthase (447 aa).

ATP-binding positions include 17–25 and Ala43; that span reads AFSGGLDTS. Tyr99 contributes to the L-citrulline binding site. ATP-binding residues include Gly129 and Thr131. Residues Thr131, Asn135, and Asp136 each contribute to the L-aspartate site. Asn135 provides a ligand contact to L-citrulline. Asp136 is a binding site for ATP. L-citrulline-binding residues include Arg139 and Ser192. Residue Asp194 participates in ATP binding. L-citrulline-binding residues include Thr201, Glu203, and Glu280.

It belongs to the argininosuccinate synthase family. Type 2 subfamily. Homotetramer.

The protein localises to the cytoplasm. It catalyses the reaction L-citrulline + L-aspartate + ATP = 2-(N(omega)-L-arginino)succinate + AMP + diphosphate + H(+). Its pathway is amino-acid biosynthesis; L-arginine biosynthesis; L-arginine from L-ornithine and carbamoyl phosphate: step 2/3. The protein is Argininosuccinate synthase of Salmonella schwarzengrund (strain CVM19633).